The sequence spans 125 residues: Large ribosomal subunit protein bL12 (125 aa).

The protein belongs to the bacterial ribosomal protein bL12 family. In terms of assembly, homodimer. Part of the ribosomal stalk of the 50S ribosomal subunit. Forms a multimeric L10(L12)X complex, where L10 forms an elongated spine to which 2 to 4 L12 dimers bind in a sequential fashion. Binds GTP-bound translation factors.

Forms part of the ribosomal stalk which helps the ribosome interact with GTP-bound translation factors. Is thus essential for accurate translation. This Rhizobium leguminosarum bv. trifolii (strain WSM2304) protein is Large ribosomal subunit protein bL12.